The following is a 210-amino-acid chain: Putative 3-methyladenine DNA glycosylase (210 aa).

The protein belongs to the DNA glycosylase MPG family.

The sequence is that of Putative 3-methyladenine DNA glycosylase from Corynebacterium glutamicum (strain R).